We begin with the raw amino-acid sequence, 212 residues long: Pyridoxine/pyridoxamine 5'-phosphate oxidase (212 aa).

Residues 8–11 (RREY) and K66 contribute to the substrate site. FMN-binding positions include 61 to 66 (RIVLLK), 76 to 77 (FT), R82, K83, and Q105. Substrate contacts are provided by Y123, R127, and S131. Residues 140-141 (QS) and W185 contribute to the FMN site. 191-193 (RLH) provides a ligand contact to substrate. R195 is a binding site for FMN.

The protein belongs to the pyridoxamine 5'-phosphate oxidase family. In terms of assembly, homodimer. It depends on FMN as a cofactor.

The catalysed reaction is pyridoxamine 5'-phosphate + O2 + H2O = pyridoxal 5'-phosphate + H2O2 + NH4(+). It carries out the reaction pyridoxine 5'-phosphate + O2 = pyridoxal 5'-phosphate + H2O2. Its pathway is cofactor metabolism; pyridoxal 5'-phosphate salvage; pyridoxal 5'-phosphate from pyridoxamine 5'-phosphate: step 1/1. It functions in the pathway cofactor metabolism; pyridoxal 5'-phosphate salvage; pyridoxal 5'-phosphate from pyridoxine 5'-phosphate: step 1/1. In terms of biological role, catalyzes the oxidation of either pyridoxine 5'-phosphate (PNP) or pyridoxamine 5'-phosphate (PMP) into pyridoxal 5'-phosphate (PLP). This chain is Pyridoxine/pyridoxamine 5'-phosphate oxidase, found in Shewanella amazonensis (strain ATCC BAA-1098 / SB2B).